We begin with the raw amino-acid sequence, 287 residues long: Immunoglobulin alpha Fc receptor (287 aa).

A signal peptide spans 1 to 21 (MDPKQTTLLCLVLCLGQRIQA). Residues 22-227 (QEGDFPMPFI…SIHQDYTTQN (206 aa)) lie on the Extracellular side of the membrane. 2 Ig-like C2-type domains span residues 42 to 107 (DGSV…IGHY) and 139 to 200 (GENI…YNRS). A disulfide bond links Cys-49 and Cys-100. Residues Asn-65, Asn-79, Asn-141, Asn-177, and Asn-186 are each glycosylated (N-linked (GlcNAc...) asparagine). A disulfide bond links Cys-146 and Cys-193. The helical transmembrane segment at 228–246 (LIRMAVAGLVLVALLAILV) threads the bilayer. Topologically, residues 247–287 (ENWHSHTALNKEASADVAEPSWSQQMCQPGLTFARTPSVCK) are cytoplasmic.

Associates with the Fc epsilon RI gamma 2 receptor inducing tyrosine phosphorylation of gamma 2. As to quaternary structure, (Microbial infection) Interacts with Staphylococcus aureus protein SSL11. Isoform A.1, isoform A.2 and isoform A.3 are differentially expressed between blood and mucosal myeloid cells. Isoform A.1, isoform A.2 and isoform A.3 are expressed in monocytes. Isoform A.1 and isoform A.2 are expressed in alveolar macrophages; however only one isoform is expressed at alveolar macrophages surfaces.

It is found in the cell membrane. It localises to the secreted. Functionally, binds to the Fc region of immunoglobulins alpha. Mediates several functions including cytokine production. The polypeptide is Immunoglobulin alpha Fc receptor (FCAR) (Homo sapiens (Human)).